Here is a 400-residue protein sequence, read N- to C-terminus: Autophagy-related protein 18 (400 aa).

WD repeat units follow at residues 163–203 (AHKS…KLYQ) and 208–247 (SMPS…PSED). The L/FRRG motif motif lies at 204–208 (FRRGS). A disordered region spans residues 241–296 (HQDPSEDLPTSPIGTDSRKTNSTPRERAFSQGSSTLSGGDNSPTDGDPSDISSRKH). Over residues 256–268 (DSRKTNSTPRERA) the composition is skewed to basic and acidic residues. Residues 270–284 (SQGSSTLSGGDNSPT) show a composition bias toward polar residues. WD repeat units follow at residues 295-341 (KHNG…AWIR) and 353-393 (SNAG…GGEG).

The protein belongs to the WD repeat PROPPIN family. In terms of assembly, component of the PI(3,5)P2 regulatory complex.

The protein resides in the preautophagosomal structure membrane. Its subcellular location is the vacuole membrane. It is found in the endosome membrane. Functionally, the PI(3,5)P2 regulatory complex regulates both the synthesis and turnover of phosphatidylinositol 3,5-bisphosphate (PtdIns(3,5)P2). Necessary for proper vacuole morphology. Plays an important role in osmotically-induced vacuole fragmentation. Required for cytoplasm to vacuole transport (Cvt) vesicle formation, pexophagy and starvation-induced autophagy. Involved in correct ATG9 trafficking to the pre-autophagosomal structure. Might also be involved in premeiotic DNA replication. The sequence is that of Autophagy-related protein 18 (ATG18) from Ajellomyces capsulatus (strain NAm1 / WU24) (Darling's disease fungus).